The sequence spans 333 residues: MELIVKEESKTDYNYGSDPYKRDIKTLLNTGLVVIDKPSGPTSHEVAAWVRNMLNLVKAGHGGTLDPKVTGALPVALGNTTKCVPIWHIPPKEYVCLMHLHDDAKLEDIENIFKEFTGRIHQRPPLKAAVKRSLRIRKIYEIEILEIDGRDILFRTKCQSGTYLRKLVDDMGEALGTSAHMQELRRTISGPFYENEAVYLQDLLDAYIFWKEDGNEEELRKLVKPLEYGLQHLKKIIVKDSAVDAVCHGATLYSSGVSKIEKGIGTDEVVLIETLKGEAVAVGKPLMNTKDMLKTEEGEVVEITRVIMEPGIYPRIWKKRNKNDKTKAESKKK.

The active-site Nucleophile is the Asp66. The PUA domain maps to 233-308 (LKKIIVKDSA…EVVEITRVIM (76 aa)).

Belongs to the pseudouridine synthase TruB family. Type 2 subfamily.

It catalyses the reaction uridine(55) in tRNA = pseudouridine(55) in tRNA. Could be responsible for synthesis of pseudouridine from uracil-55 in the psi GC loop of transfer RNAs. This is Probable tRNA pseudouridine synthase B from Methanococcus maripaludis (strain C7 / ATCC BAA-1331).